The chain runs to 348 residues: Phospho-2-dehydro-3-deoxyheptonate aldolase, Trp-sensitive (348 aa).

Belongs to the class-I DAHP synthase family.

It catalyses the reaction D-erythrose 4-phosphate + phosphoenolpyruvate + H2O = 7-phospho-2-dehydro-3-deoxy-D-arabino-heptonate + phosphate. The protein operates within metabolic intermediate biosynthesis; chorismate biosynthesis; chorismate from D-erythrose 4-phosphate and phosphoenolpyruvate: step 1/7. Its function is as follows. Stereospecific condensation of phosphoenolpyruvate (PEP) and D-erythrose-4-phosphate (E4P) giving rise to 3-deoxy-D-arabino-heptulosonate-7-phosphate (DAHP). The chain is Phospho-2-dehydro-3-deoxyheptonate aldolase, Trp-sensitive (aroH) from Escherichia coli (strain K12).